A 162-amino-acid chain; its full sequence is NADPH-dependent 7-cyano-7-deazaguanine reductase (162 aa).

Catalysis depends on Cys53, which acts as the Thioimide intermediate. Catalysis depends on Asp60, which acts as the Proton donor. Substrate-binding positions include 75 to 77 and 94 to 95; these read VES and HE.

This sequence belongs to the GTP cyclohydrolase I family. QueF type 1 subfamily.

The protein resides in the cytoplasm. It carries out the reaction 7-aminomethyl-7-carbaguanine + 2 NADP(+) = 7-cyano-7-deazaguanine + 2 NADPH + 3 H(+). Its pathway is tRNA modification; tRNA-queuosine biosynthesis. In terms of biological role, catalyzes the NADPH-dependent reduction of 7-cyano-7-deazaguanine (preQ0) to 7-aminomethyl-7-deazaguanine (preQ1). The protein is NADPH-dependent 7-cyano-7-deazaguanine reductase of Exiguobacterium sp. (strain ATCC BAA-1283 / AT1b).